The chain runs to 252 residues: MQICLMDETGATDGALSVLAARWGLEHDEDNPMALVLTPQHLELRKRDEPKLGGIFVDFVGGAMAHRRKFGGGRGEAVAKAVGIKGDYLPDVVDATAGLGRDAFVLASVGCRVRMLERNPVVAALLDDGLTRGYADADIGGWLQERLQLIHVSSLTALTDITPRPQVVYLDPMFPHRQKSALVKKEMRVFQSLVGPDLDADGLLEPARQLATKRVVVKRPDYAPPLADVATPNAIVTKGHRFDIYAGTPLTE.

S-adenosyl-L-methionine is bound by residues 101–102 (RD), 117–118 (ER), 153–154 (SS), and aspartate 171.

The protein belongs to the methyltransferase superfamily. RsmJ family.

Its subcellular location is the cytoplasm. The catalysed reaction is guanosine(1516) in 16S rRNA + S-adenosyl-L-methionine = N(2)-methylguanosine(1516) in 16S rRNA + S-adenosyl-L-homocysteine + H(+). Its function is as follows. Specifically methylates the guanosine in position 1516 of 16S rRNA. This is Ribosomal RNA small subunit methyltransferase J from Salmonella heidelberg (strain SL476).